Reading from the N-terminus, the 424-residue chain is Galacturonokinase (424 aa).

Ser-2 bears the N-acetylserine mark. 146 to 155 (DSSGLSSSAA) contacts ATP. Asp-197 acts as the Proton acceptor in catalysis.

It belongs to the GHMP kinase family. The cofactor is Mg(2+). Mn(2+) is required as a cofactor. Requires Ca(2+) as cofactor. In terms of tissue distribution, expressed in roots, stems, leaves, flowers and young siliques. Higher expression in the elongating middle stem region than in the lower or upper stem region.

It carries out the reaction D-galacturonate + ATP = 1-phospho-alpha-D-galacturonate + ADP + H(+). With respect to regulation, inhibited by EDTA and ADP. Sugar-1-kinase with a strict substrate specificity for the alpha-anomeric configuration of D-galacturonic acid (D-GalA) and ATP. Involved in the biosynthesis of UDP-galacturonic acid (UDP-GalA) from the salvaged GalA that is released during growth-dependent cell wall restructuring. The polypeptide is Galacturonokinase (GALAK) (Arabidopsis thaliana (Mouse-ear cress)).